Reading from the N-terminus, the 315-residue chain is CRISPR-associated endonuclease Cas1 1 (315 aa).

Mn(2+) is bound by residues E144, H208, and E223.

This sequence belongs to the CRISPR-associated endonuclease Cas1 family. Homodimer, forms a heterotetramer with a Cas2 homodimer. Requires Mg(2+) as cofactor. Mn(2+) is required as a cofactor.

CRISPR (clustered regularly interspaced short palindromic repeat), is an adaptive immune system that provides protection against mobile genetic elements (viruses, transposable elements and conjugative plasmids). CRISPR clusters contain spacers, sequences complementary to antecedent mobile elements, and target invading nucleic acids. CRISPR clusters are transcribed and processed into CRISPR RNA (crRNA). Acts as a dsDNA endonuclease. Involved in the integration of spacer DNA into the CRISPR cassette. The sequence is that of CRISPR-associated endonuclease Cas1 1 from Thermus thermophilus (strain ATCC 27634 / DSM 579 / HB8).